The sequence spans 521 residues: Methionine--tRNA ligase (521 aa).

Residues tyrosine 14 to histidine 24 carry the 'HIGH' region motif. Zn(2+)-binding residues include cysteine 129, cysteine 132, cysteine 151, and histidine 155. Positions lysine 306 to serine 310 match the 'KMSKS' region motif. Lysine 309 contacts ATP.

The protein belongs to the class-I aminoacyl-tRNA synthetase family. MetG type 2A subfamily. Monomer. Zn(2+) serves as cofactor.

The protein localises to the cytoplasm. It catalyses the reaction tRNA(Met) + L-methionine + ATP = L-methionyl-tRNA(Met) + AMP + diphosphate. Functionally, is required not only for elongation of protein synthesis but also for the initiation of all mRNA translation through initiator tRNA(fMet) aminoacylation. This chain is Methionine--tRNA ligase, found in Ureaplasma parvum serovar 3 (strain ATCC 700970).